A 288-amino-acid chain; its full sequence is MSSSNWIDDAFTEEELLAIDAIEASYNFSRSSSSSSSAAPTVQATTSVHGHEEDPNQIPNNIRRQLPRSITSSTSYKRFPLSRCRARNFPAMRFGGRILYSKTATEVDKRAMQLIKVLDTKRDESGIAFVGLDIEWRPSFRKGVLPGKVATVQICVDSNYCDVMHIFHSGIPQSLQHLIEDSTLVKVGIGIDGDSVKLFHDYGVSIKDVEDLSDLANQKIGGDKKWGLASLTETLVCKELLKPNRIRLGNWEFYPLSKQQLQYAATDAYASWHLYKVLKDLPDAVSGS.

Residues R30–P67 form a disordered region. Composition is skewed to polar residues over residues A38 to V48 and Q57 to P67. Positions F129–K279 constitute a 3'-5' exonuclease domain.

In terms of assembly, interacts with KU70 and KU80. Interacts with RECQL2. Mg(2+) is required as a cofactor. It depends on Mn(2+) as a cofactor. Expressed ubiquitously.

It localises to the nucleus. Activated upon interaction with the KU heterodimer. Not stimulated by ATP. In terms of biological role, exonuclease that digests recessed strands of DNA duplexes in the 3' to 5' direction but hardly single-stranded DNA or blunt-ended duplexes. Also able to digest 3'-protruding strands and 3'-recessed strand termini of duplexes containing mismatched bases. The polypeptide is 3'-5' exonuclease (WEX) (Arabidopsis thaliana (Mouse-ear cress)).